The following is a 375-amino-acid chain: Aminomethyltransferase (375 aa).

Belongs to the GcvT family. The glycine cleavage system is composed of four proteins: P, T, L and H.

It carries out the reaction N(6)-[(R)-S(8)-aminomethyldihydrolipoyl]-L-lysyl-[protein] + (6S)-5,6,7,8-tetrahydrofolate = N(6)-[(R)-dihydrolipoyl]-L-lysyl-[protein] + (6R)-5,10-methylene-5,6,7,8-tetrahydrofolate + NH4(+). In terms of biological role, the glycine cleavage system catalyzes the degradation of glycine. The polypeptide is Aminomethyltransferase (Cupriavidus taiwanensis (strain DSM 17343 / BCRC 17206 / CCUG 44338 / CIP 107171 / LMG 19424 / R1) (Ralstonia taiwanensis (strain LMG 19424))).